The following is a 396-amino-acid chain: UPF0164 protein TP_0858 (396 aa).

Positions methionine 1 to alanine 28 are cleaved as a signal peptide.

It belongs to the UPF0164 family.

The protein is UPF0164 protein TP_0858 of Treponema pallidum (strain Nichols).